The primary structure comprises 482 residues: Magnesium-dependent glutamate N-prenyltransferase (482 aa).

4 residues coordinate Mg(2+): N351, T355, E359, and F366.

The protein belongs to the terpene synthase family. The cofactor is Mg(2+).

It carries out the reaction (2E)-geranyl diphosphate + L-glutamate = N-geranyl-L-glutamate + diphosphate. It participates in secondary metabolite biosynthesis. In terms of biological role, magnesium-dependent glutamate N-prenyltransferase: part of the gene cluster that mediates the biosynthesis of domoic acid (DA) and derivatives, natural products with neurochemical activity acting as ionotropic glutamate receptor (iGluR) agonists, thus being neurotoxins causing amnesic shellfish poisoning (ASP). Catalyzes the conversion of L-glutamic acid (L-Glu) to N-geranyl-L-glutamic acid (NGG) in the presence of geranyl diphosphate (GPP). Also able to catalyze the formation of farnesyl-L-glutamate from farnesyl diphosphate (FPP). Cannot use dimethylallyl diphosphate (DMAPP) as substrate. In Pseudo-nitzschia multiseries (Marine planktonic diatom), this protein is Magnesium-dependent glutamate N-prenyltransferase.